The primary structure comprises 453 residues: Bifunctional protein GlmU (453 aa).

The segment at 1–226 is pyrophosphorylase; sequence MSFSAVILAA…PIEVEGVNNR (226 aa). UDP-N-acetyl-alpha-D-glucosamine-binding positions include 8–11, lysine 22, glutamine 73, 78–79, 100–102, glycine 137, glutamate 151, asparagine 166, and asparagine 224; these read LAAG, GT, and YGD. Aspartate 102 serves as a coordination point for Mg(2+). Asparagine 224 is a binding site for Mg(2+). The linker stretch occupies residues 227 to 247; the sequence is IQLARLERAYQAMQAERLLEQ. An N-acetyltransferase region spans residues 248–453; sequence GVMLRDPSRF…KGWKRPVKQK (206 aa). Residues arginine 330 and lysine 348 each contribute to the UDP-N-acetyl-alpha-D-glucosamine site. Catalysis depends on histidine 360, which acts as the Proton acceptor. UDP-N-acetyl-alpha-D-glucosamine is bound by residues tyrosine 363 and asparagine 374. Acetyl-CoA is bound by residues alanine 377, 383 to 384, serine 402, alanine 420, and arginine 437; that span reads NY.

It in the N-terminal section; belongs to the N-acetylglucosamine-1-phosphate uridyltransferase family. The protein in the C-terminal section; belongs to the transferase hexapeptide repeat family. Homotrimer. It depends on Mg(2+) as a cofactor.

It is found in the cytoplasm. It catalyses the reaction alpha-D-glucosamine 1-phosphate + acetyl-CoA = N-acetyl-alpha-D-glucosamine 1-phosphate + CoA + H(+). It carries out the reaction N-acetyl-alpha-D-glucosamine 1-phosphate + UTP + H(+) = UDP-N-acetyl-alpha-D-glucosamine + diphosphate. It participates in nucleotide-sugar biosynthesis; UDP-N-acetyl-alpha-D-glucosamine biosynthesis; N-acetyl-alpha-D-glucosamine 1-phosphate from alpha-D-glucosamine 6-phosphate (route II): step 2/2. Its pathway is nucleotide-sugar biosynthesis; UDP-N-acetyl-alpha-D-glucosamine biosynthesis; UDP-N-acetyl-alpha-D-glucosamine from N-acetyl-alpha-D-glucosamine 1-phosphate: step 1/1. The protein operates within bacterial outer membrane biogenesis; LPS lipid A biosynthesis. In terms of biological role, catalyzes the last two sequential reactions in the de novo biosynthetic pathway for UDP-N-acetylglucosamine (UDP-GlcNAc). The C-terminal domain catalyzes the transfer of acetyl group from acetyl coenzyme A to glucosamine-1-phosphate (GlcN-1-P) to produce N-acetylglucosamine-1-phosphate (GlcNAc-1-P), which is converted into UDP-GlcNAc by the transfer of uridine 5-monophosphate (from uridine 5-triphosphate), a reaction catalyzed by the N-terminal domain. This chain is Bifunctional protein GlmU, found in Photobacterium profundum (strain SS9).